We begin with the raw amino-acid sequence, 531 residues long: Putative aldehyde dehydrogenase family 7 member A1 homolog (531 aa).

264–269 (GSSEIG) contacts NAD(+). Glu286 (proton acceptor) is an active-site residue. Cys320 acts as the Nucleophile in catalysis.

The protein belongs to the aldehyde dehydrogenase family. Homotetramer.

It catalyses the reaction an aldehyde + NAD(+) + H2O = a carboxylate + NADH + 2 H(+). The chain is Putative aldehyde dehydrogenase family 7 member A1 homolog (alh-9) from Caenorhabditis elegans.